We begin with the raw amino-acid sequence, 395 residues long: Acetate kinase 2 (395 aa).

Asn-8 lines the Mg(2+) pocket. ATP is bound at residue Lys-15. Position 89 (Arg-89) interacts with substrate. The active-site Proton donor/acceptor is the Asp-146. ATP is bound by residues 206-210 (HIGNG), 283-285 (DMR), and 331-335 (GVGEN). Residue Glu-383 coordinates Mg(2+).

This sequence belongs to the acetokinase family. In terms of assembly, homodimer. It depends on Mg(2+) as a cofactor. Mn(2+) serves as cofactor.

Its subcellular location is the cytoplasm. The catalysed reaction is acetate + ATP = acetyl phosphate + ADP. It participates in metabolic intermediate biosynthesis; acetyl-CoA biosynthesis; acetyl-CoA from acetate: step 1/2. Catalyzes the formation of acetyl phosphate from acetate and ATP. Can also catalyze the reverse reaction. This chain is Acetate kinase 2, found in Lactococcus lactis subsp. lactis (strain IL1403) (Streptococcus lactis).